Here is a 118-residue protein sequence, read N- to C-terminus: Vesicle-associated membrane protein 1 (118 aa).

Residues 1-36 form a disordered region; sequence MSAPAQPPAEGTEGTAPGGGPPGPPPNMTSNRRLQQ. At 1 to 96 the chain is on the cytoplasmic side; the sequence is MSAPAQPPAE…KRKYWWKNCK (96 aa). One can recognise a v-SNARE coiled-coil homology domain in the interval 33–93; the sequence is RLQQTQAQVE…AKLKRKYWWK (61 aa). The residue at position 63 (Ser63) is a Phosphoserine. The helical; Anchor for type IV membrane protein transmembrane segment at 97–116 threads the bilayer; that stretch reads MMIMLGAICAIIVVVIVIYF. Over 117-118 the chain is Vesicular; the sequence is FT.

The protein belongs to the synaptobrevin family. In terms of assembly, interacts with VAPA and VAPB. Post-translationally, (Microbial infection) Targeted and hydrolyzed by C.botulinum neurotoxin type B (BoNT/B, botB) which probably hydrolyzes the 78-Gln-|-Phe-79 bond and inhibits neurotransmitter release. In terms of processing, (Microbial infection) Targeted and hydrolyzed by C.botulinum neurotoxin type D (BoNT/D, botD) which probably hydrolyzes the 61-Arg-|-Leu-62 bond and inhibits neurotransmitter release. BoNT/D has low catalytic activity on this protein due to its sequence. Note that humans are not known to be infected by C.botulinum type D. (Microbial infection) Targeted and hydrolyzed by C.botulinum neurotoxin type F (BoNT/F, botF) which probably hydrolyzes the 60-Gln-|-Lys-61 bond and inhibits neurotransmitter release. Post-translationally, (Microbial infection) Targeted and hydrolyzed by C.botulinum neurotoxin type X (BoNT/X) which probably hydrolyzes the 68-Arg-|-Ala-69 bond and inhibits neurotransmitter release. It remains unknown whether BoNT/X is ever produced, or what organisms it targets. In terms of tissue distribution, nervous system, skeletal muscle and adipose tissue.

The protein resides in the cytoplasmic vesicle. It localises to the secretory vesicle. It is found in the synaptic vesicle membrane. The protein localises to the synapse. Its subcellular location is the synaptosome. The protein resides in the cytoplasmic vesicle membrane. It localises to the mitochondrion outer membrane. Functionally, involved in the targeting and/or fusion of transport vesicles to their target membrane. This is Vesicle-associated membrane protein 1 (VAMP1) from Homo sapiens (Human).